Reading from the N-terminus, the 118-residue chain is UPF0212 protein HQ_2663A (118 aa).

This sequence belongs to the UPF0212 family.

The chain is UPF0212 protein HQ_2663A from Haloquadratum walsbyi (strain DSM 16790 / HBSQ001).